We begin with the raw amino-acid sequence, 514 residues long: 2,3-bisphosphoglycerate-independent phosphoglycerate mutase (514 aa).

2 residues coordinate Mn(2+): Asp-14 and Ser-64. Ser-64 (phosphoserine intermediate) is an active-site residue. Residues His-125, 155–156 (RD), Arg-187, Arg-193, 263–266 (RADR), and Lys-336 contribute to the substrate site. 5 residues coordinate Mn(2+): Asp-403, His-407, Asp-444, His-445, and His-463.

This sequence belongs to the BPG-independent phosphoglycerate mutase family. In terms of assembly, monomer. Mn(2+) serves as cofactor.

It carries out the reaction (2R)-2-phosphoglycerate = (2R)-3-phosphoglycerate. It functions in the pathway carbohydrate degradation; glycolysis; pyruvate from D-glyceraldehyde 3-phosphate: step 3/5. Its function is as follows. Catalyzes the interconversion of 2-phosphoglycerate and 3-phosphoglycerate. The chain is 2,3-bisphosphoglycerate-independent phosphoglycerate mutase from Shewanella oneidensis (strain ATCC 700550 / JCM 31522 / CIP 106686 / LMG 19005 / NCIMB 14063 / MR-1).